Reading from the N-terminus, the 353-residue chain is Photosystem II protein D1 (353 aa).

Residue T2 is modified to N-acetylthreonine. At T2 the chain carries Phosphothreonine. A run of 3 helical transmembrane segments spans residues 29-46 (YIGWFGVLMIPTLLTATS), 118-133 (HFLLGVACYMGREWEL), and 142-156 (WIAVAYSAPVAAATA). A chlorophyll a-binding site is contributed by H118. Y126 is a pheophytin a binding site. [CaMn4O5] cluster-binding residues include D170 and E189. The chain crosses the membrane as a helical span at residues 197–218 (FHMLGVAGVFGGSLFSAMHGSL). H198 lines the chlorophyll a pocket. Position 215 (H215) interacts with a quinone. Fe cation contacts are provided by H215 and H272. Residues 274-288 (FLAAWPVVGIWFTAL) form a helical membrane-spanning segment. 4 residues coordinate [CaMn4O5] cluster: H332, E333, D342, and A344. Positions 345-353 (AVEAPSING) are excised as a propeptide.

It belongs to the reaction center PufL/M/PsbA/D family. As to quaternary structure, PSII is composed of 1 copy each of membrane proteins PsbA, PsbB, PsbC, PsbD, PsbE, PsbF, PsbH, PsbI, PsbJ, PsbK, PsbL, PsbM, PsbT, PsbX, PsbY, PsbZ, Psb30/Ycf12, at least 3 peripheral proteins of the oxygen-evolving complex and a large number of cofactors. It forms dimeric complexes. Requires The D1/D2 heterodimer binds P680, chlorophylls that are the primary electron donor of PSII, and subsequent electron acceptors. It shares a non-heme iron and each subunit binds pheophytin, quinone, additional chlorophylls, carotenoids and lipids. D1 provides most of the ligands for the Mn4-Ca-O5 cluster of the oxygen-evolving complex (OEC). There is also a Cl(-1) ion associated with D1 and D2, which is required for oxygen evolution. The PSII complex binds additional chlorophylls, carotenoids and specific lipids. as cofactor. Tyr-161 forms a radical intermediate that is referred to as redox-active TyrZ, YZ or Y-Z. In terms of processing, C-terminally processed by CTPA; processing is essential to allow assembly of the oxygen-evolving complex and thus photosynthetic growth.

It localises to the plastid. The protein localises to the chloroplast thylakoid membrane. The catalysed reaction is 2 a plastoquinone + 4 hnu + 2 H2O = 2 a plastoquinol + O2. Its function is as follows. Photosystem II (PSII) is a light-driven water:plastoquinone oxidoreductase that uses light energy to abstract electrons from H(2)O, generating O(2) and a proton gradient subsequently used for ATP formation. It consists of a core antenna complex that captures photons, and an electron transfer chain that converts photonic excitation into a charge separation. The D1/D2 (PsbA/PsbD) reaction center heterodimer binds P680, the primary electron donor of PSII as well as several subsequent electron acceptors. The sequence is that of Photosystem II protein D1 from Brassica napus (Rape).